We begin with the raw amino-acid sequence, 200 residues long: NAD(P)H-quinone oxidoreductase subunit 6, chloroplastic (200 aa).

5 consecutive transmembrane segments (helical) span residues 13–33 (VFFVFIELGLIFGSLGVVFLT), 35–55 (IVYSAFLLGLVFVCISFLYLL), 64–84 (AQILIYVGAVNILIVFAVMLI), 101–121 (TITLILCTSLFFLLISMILSI), and 156–176 (LLPFELLSIVLLVALIGAITI).

The protein belongs to the complex I subunit 6 family. As to quaternary structure, NDH is composed of at least 16 different subunits, 5 of which are encoded in the nucleus.

It is found in the plastid. The protein localises to the chloroplast thylakoid membrane. It carries out the reaction a plastoquinone + NADH + (n+1) H(+)(in) = a plastoquinol + NAD(+) + n H(+)(out). The enzyme catalyses a plastoquinone + NADPH + (n+1) H(+)(in) = a plastoquinol + NADP(+) + n H(+)(out). In terms of biological role, NDH shuttles electrons from NAD(P)H:plastoquinone, via FMN and iron-sulfur (Fe-S) centers, to quinones in the photosynthetic chain and possibly in a chloroplast respiratory chain. The immediate electron acceptor for the enzyme in this species is believed to be plastoquinone. Couples the redox reaction to proton translocation, and thus conserves the redox energy in a proton gradient. This is NAD(P)H-quinone oxidoreductase subunit 6, chloroplastic (ndhG) from Anthoceros angustus (Hornwort).